Consider the following 90-residue polypeptide: UPF0512 protein L (90 aa).

It belongs to the UPF0512 family.

The polypeptide is UPF0512 protein L (Dictyostelium discoideum (Social amoeba)).